The following is a 415-amino-acid chain: D-galactonate dehydratase family member RspA (415 aa).

Substrate is bound by residues N48 and H133. Residue Y170 is the Proton donor/acceptor of the active site. D223 contributes to the Mg(2+) binding site. The active-site Proton donor/acceptor is H225. Residues E249 and E275 each coordinate Mg(2+). Substrate-binding residues include E275, R296, H325, D329, and E352.

Belongs to the mandelate racemase/muconate lactonizing enzyme family. GalD subfamily. Mg(2+) is required as a cofactor.

The enzyme catalyses D-mannonate = 2-dehydro-3-deoxy-D-gluconate + H2O. Has low D-mannonate dehydratase activity (in vitro), suggesting that this is not a physiological substrate and that it has no significant role in D-mannonate degradation in vivo. Has no detectable activity with a panel of 70 other acid sugars (in vitro). In Escherichia coli (strain MS 21-1), this protein is D-galactonate dehydratase family member RspA (rspA).